Here is a 429-residue protein sequence, read N- to C-terminus: Adenylosuccinate synthetase (429 aa).

Residues 13 to 19 (GDEGKGK) and 41 to 43 (GHT) contribute to the GTP site. Asp14 (proton acceptor) is an active-site residue. The Mg(2+) site is built by Asp14 and Gly41. IMP is bound by residues 14-17 (DEGK), 39-42 (NAGH), Thr130, Arg144, Gln224, Thr239, and Arg303. His42 serves as the catalytic Proton donor. 299–305 (ATTGRAR) is a binding site for substrate. Residues Arg305, 331–333 (KLD), and 412–414 (STG) contribute to the GTP site.

It belongs to the adenylosuccinate synthetase family. In terms of assembly, homodimer. Requires Mg(2+) as cofactor.

The protein resides in the cytoplasm. The catalysed reaction is IMP + L-aspartate + GTP = N(6)-(1,2-dicarboxyethyl)-AMP + GDP + phosphate + 2 H(+). It participates in purine metabolism; AMP biosynthesis via de novo pathway; AMP from IMP: step 1/2. In terms of biological role, plays an important role in the de novo pathway of purine nucleotide biosynthesis. Catalyzes the first committed step in the biosynthesis of AMP from IMP. This is Adenylosuccinate synthetase from Psychrobacter arcticus (strain DSM 17307 / VKM B-2377 / 273-4).